Reading from the N-terminus, the 157-residue chain is Thioredoxin-T (157 aa).

The Thioredoxin domain occupies 2–107 (VYPVRNKDDL…LAKLMEKHAG (106 aa)). An intrachain disulfide couples Cys-32 to Cys-35. The disordered stretch occupies residues 132-157 (ESSESDNDNNNVNEVSAHDENAVLEH). Residues 147-157 (SAHDENAVLEH) show a composition bias toward basic and acidic residues.

This sequence belongs to the thioredoxin family. In terms of tissue distribution, testis specific. Not expressed in the embryo. Becomes progressively more strongly expressed during larval and pupal development. In testis, it is strongly expressed in young spermatocytes, and postmeiotic spermatid stages, then expression decreases at the nuclear elongation stage. Strongly expressed in the waste bag, in which material no longer needed for the mature sperm is eliminated. Not expressed in the stem cells and spermatogonial cells.

It is found in the nucleus. It localises to the chromosome. Functionally, probably participates in various redox reactions through the reversible oxidation of its active center dithiol to a disulfide and catalyzes dithiol-disulfide exchange reactions. Its tissue specificity suggests a regulatory role in the germline. The chain is Thioredoxin-T (TrxT) from Drosophila melanogaster (Fruit fly).